The sequence spans 372 residues: Dual-specificity RNA methyltransferase RlmN (372 aa).

Glu-94 serves as the catalytic Proton acceptor. The region spanning 100 to 339 (DGDRATLCVS…VTIRKTRGDD (240 aa)) is the Radical SAM core domain. Cys-107 and Cys-344 are oxidised to a cystine. Positions 114, 118, and 121 each coordinate [4Fe-4S] cluster. S-adenosyl-L-methionine-binding positions include 168–169 (GE), Ser-200, 222–224 (SLH), and Asn-301. The active-site S-methylcysteine intermediate is the Cys-344.

The protein belongs to the radical SAM superfamily. RlmN family. [4Fe-4S] cluster is required as a cofactor.

Its subcellular location is the cytoplasm. The enzyme catalyses adenosine(2503) in 23S rRNA + 2 reduced [2Fe-2S]-[ferredoxin] + 2 S-adenosyl-L-methionine = 2-methyladenosine(2503) in 23S rRNA + 5'-deoxyadenosine + L-methionine + 2 oxidized [2Fe-2S]-[ferredoxin] + S-adenosyl-L-homocysteine. It carries out the reaction adenosine(37) in tRNA + 2 reduced [2Fe-2S]-[ferredoxin] + 2 S-adenosyl-L-methionine = 2-methyladenosine(37) in tRNA + 5'-deoxyadenosine + L-methionine + 2 oxidized [2Fe-2S]-[ferredoxin] + S-adenosyl-L-homocysteine. Its function is as follows. Specifically methylates position 2 of adenine 2503 in 23S rRNA and position 2 of adenine 37 in tRNAs. m2A2503 modification seems to play a crucial role in the proofreading step occurring at the peptidyl transferase center and thus would serve to optimize ribosomal fidelity. The protein is Dual-specificity RNA methyltransferase RlmN of Aliivibrio fischeri (strain ATCC 700601 / ES114) (Vibrio fischeri).